The sequence spans 365 residues: Putative glutamate--cysteine ligase 2-2 (365 aa).

The protein belongs to the glutamate--cysteine ligase type 2 family. YbdK subfamily.

It carries out the reaction L-cysteine + L-glutamate + ATP = gamma-L-glutamyl-L-cysteine + ADP + phosphate + H(+). ATP-dependent carboxylate-amine ligase which exhibits weak glutamate--cysteine ligase activity. In Mycolicibacterium vanbaalenii (strain DSM 7251 / JCM 13017 / BCRC 16820 / KCTC 9966 / NRRL B-24157 / PYR-1) (Mycobacterium vanbaalenii), this protein is Putative glutamate--cysteine ligase 2-2.